A 498-amino-acid chain; its full sequence is MRINPTTSGPRVSTLGKKFQGRIAQIIGPVLXVAFSTGKMPNIYNSLVVXGRDTAGQEINVTCEVQQLLGNNRVRAVAMSATDGLTRGMEVIDTGAPLSVPVGGATLGRIFNVLGEPVDNLGPVDTRTTSPIHRSAPAFTQLDTKLSIFETGIKVVDLLAPYRRGGKIGLFGGAGVGKTVLIMELINNIAKAHGGVSVFGGVGERTREGNDLYMEMKESGVINEENIAESKVALVYGQMNEPPGARMRVGLTALTMAEYFRDVNEQDVLLFIDNIFRFVQAGSEVSALLGRMPSAVGYQPTLSTEMGSLQERITSTKEGSITSIQAVYVPADDLTDPAPATTFAHLDATTVLSRGLAAKGIYPAVDPLDSTSTMLQPRIVGEEHYETAQRVKQTLQRYKELQDIIAILGLDELSEEDRLTVARARKIERFLSQPFFVAEVFTGSPGKYVGLAETIRGFQLILSGELDSFPEQAFYLVGNIDEATAKAMNLEVESKLKK.

Position 172 to 179 (172 to 179 (GGAGVGKT)) interacts with ATP.

This sequence belongs to the ATPase alpha/beta chains family. F-type ATPases have 2 components, CF(1) - the catalytic core - and CF(0) - the membrane proton channel. CF(1) has five subunits: alpha(3), beta(3), gamma(1), delta(1), epsilon(1). CF(0) has four main subunits: a(1), b(1), b'(1) and c(9-12).

Its subcellular location is the plastid. The protein resides in the chloroplast thylakoid membrane. It catalyses the reaction ATP + H2O + 4 H(+)(in) = ADP + phosphate + 5 H(+)(out). Produces ATP from ADP in the presence of a proton gradient across the membrane. The catalytic sites are hosted primarily by the beta subunits. This Nymphaea odorata (White water lily) protein is ATP synthase subunit beta, chloroplastic.